The sequence spans 168 residues: CASP-like protein UU-1 (168 aa).

Topologically, residues 1-17 (MVELESQEAVTVASTAD) are cytoplasmic. Residues 18–38 (IAVDVSLRLLAAATSLAAAVV) traverse the membrane as a helical segment. Topologically, residues 39–54 (VAANHQQRWGIRVDFT) are extracellular. Residues 55–75 (LFQVWIGFVAVNLVCTVYAAA) form a helical membrane-spanning segment. Residues 76–95 (TAAAAARKAMGRWWLHHADA) are Cytoplasmic-facing. Residues 96-116 (VVVNLEAAATAGAGAIGSIAM) traverse the membrane as a helical segment. Over 117-136 (WGNEASGWYAVCRLYRRYCN) the chain is Extracellular. Residues 137–157 (AGAAALALSLAAVLLLGVACA) form a helical membrane-spanning segment. Topologically, residues 158–168 (RSRYPKMPPTT) are cytoplasmic.

This sequence belongs to the Casparian strip membrane proteins (CASP) family. As to quaternary structure, homodimer and heterodimers.

The protein resides in the cell membrane. The protein is CASP-like protein UU-1 of Oryza sativa subsp. japonica (Rice).